A 425-amino-acid polypeptide reads, in one-letter code: Serine--tRNA ligase (425 aa).

230–232 (TAE) is a binding site for L-serine. 261-263 (RSE) serves as a coordination point for ATP. Glutamate 284 contributes to the L-serine binding site. Residue 348–351 (EISS) participates in ATP binding. Serine 384 contributes to the L-serine binding site.

This sequence belongs to the class-II aminoacyl-tRNA synthetase family. Type-1 seryl-tRNA synthetase subfamily. In terms of assembly, homodimer. The tRNA molecule binds across the dimer.

It localises to the cytoplasm. It carries out the reaction tRNA(Ser) + L-serine + ATP = L-seryl-tRNA(Ser) + AMP + diphosphate + H(+). The catalysed reaction is tRNA(Sec) + L-serine + ATP = L-seryl-tRNA(Sec) + AMP + diphosphate + H(+). The protein operates within aminoacyl-tRNA biosynthesis; selenocysteinyl-tRNA(Sec) biosynthesis; L-seryl-tRNA(Sec) from L-serine and tRNA(Sec): step 1/1. Functionally, catalyzes the attachment of serine to tRNA(Ser). Is also able to aminoacylate tRNA(Sec) with serine, to form the misacylated tRNA L-seryl-tRNA(Sec), which will be further converted into selenocysteinyl-tRNA(Sec). The polypeptide is Serine--tRNA ligase (Streptococcus agalactiae serotype Ia (strain ATCC 27591 / A909 / CDC SS700)).